Consider the following 307-residue polypeptide: 4-hydroxy-3-methylbut-2-enyl diphosphate reductase (307 aa).

Residue cysteine 13 participates in [4Fe-4S] cluster binding. The (2E)-4-hydroxy-3-methylbut-2-enyl diphosphate site is built by histidine 42 and histidine 75. Residues histidine 42 and histidine 75 each contribute to the dimethylallyl diphosphate site. Isopentenyl diphosphate-binding residues include histidine 42 and histidine 75. Position 97 (cysteine 97) interacts with [4Fe-4S] cluster. Residue histidine 125 coordinates (2E)-4-hydroxy-3-methylbut-2-enyl diphosphate. Histidine 125 serves as a coordination point for dimethylallyl diphosphate. Histidine 125 contributes to the isopentenyl diphosphate binding site. The active-site Proton donor is glutamate 127. Threonine 165 serves as a coordination point for (2E)-4-hydroxy-3-methylbut-2-enyl diphosphate. Cysteine 195 provides a ligand contact to [4Fe-4S] cluster. (2E)-4-hydroxy-3-methylbut-2-enyl diphosphate is bound by residues serine 223, serine 224, asparagine 225, and serine 267. Serine 223, serine 224, asparagine 225, and serine 267 together coordinate dimethylallyl diphosphate. Residues serine 223, serine 224, asparagine 225, and serine 267 each contribute to the isopentenyl diphosphate site.

This sequence belongs to the IspH family. It depends on [4Fe-4S] cluster as a cofactor.

The enzyme catalyses isopentenyl diphosphate + 2 oxidized [2Fe-2S]-[ferredoxin] + H2O = (2E)-4-hydroxy-3-methylbut-2-enyl diphosphate + 2 reduced [2Fe-2S]-[ferredoxin] + 2 H(+). The catalysed reaction is dimethylallyl diphosphate + 2 oxidized [2Fe-2S]-[ferredoxin] + H2O = (2E)-4-hydroxy-3-methylbut-2-enyl diphosphate + 2 reduced [2Fe-2S]-[ferredoxin] + 2 H(+). The protein operates within isoprenoid biosynthesis; dimethylallyl diphosphate biosynthesis; dimethylallyl diphosphate from (2E)-4-hydroxy-3-methylbutenyl diphosphate: step 1/1. Its pathway is isoprenoid biosynthesis; isopentenyl diphosphate biosynthesis via DXP pathway; isopentenyl diphosphate from 1-deoxy-D-xylulose 5-phosphate: step 6/6. Catalyzes the conversion of 1-hydroxy-2-methyl-2-(E)-butenyl 4-diphosphate (HMBPP) into a mixture of isopentenyl diphosphate (IPP) and dimethylallyl diphosphate (DMAPP). Acts in the terminal step of the DOXP/MEP pathway for isoprenoid precursor biosynthesis. The polypeptide is 4-hydroxy-3-methylbut-2-enyl diphosphate reductase (Chlamydia trachomatis serovar D (strain ATCC VR-885 / DSM 19411 / UW-3/Cx)).